The chain runs to 223 residues: Ribosomal RNA small subunit methyltransferase G (223 aa).

S-adenosyl-L-methionine-binding positions include Gly-82, Leu-87, 133–134 (AE), and Arg-151.

This sequence belongs to the methyltransferase superfamily. RNA methyltransferase RsmG family.

The protein localises to the cytoplasm. Specifically methylates the N7 position of guanine in position 518 of 16S rRNA. The chain is Ribosomal RNA small subunit methyltransferase G from Corynebacterium glutamicum (strain R).